The sequence spans 137 residues: Large-conductance mechanosensitive channel (137 aa).

A run of 2 helical transmembrane segments spans residues 10–30 (FAMRGNVVDLAVGVIIGAAFG) and 76–96 (GVFIQNVFDFVIVAFAIFMAI).

It belongs to the MscL family. As to quaternary structure, homopentamer.

It is found in the cell inner membrane. In terms of biological role, channel that opens in response to stretch forces in the membrane lipid bilayer. May participate in the regulation of osmotic pressure changes within the cell. This is Large-conductance mechanosensitive channel from Enterobacter sp. (strain 638).